A 309-amino-acid chain; its full sequence is NAD-dependent protein deacylase sirtuin-5, mitochondrial (309 aa).

Residues 1 to 35 (MILLPFHTRRLVSHVYCGLKPASKKKGIALEMARP) constitute a mitochondrion transit peptide. In terms of domain architecture, Deacetylase sirtuin-type spans 36-306 (SSNLADFREA…PPAIARHETE (271 aa)). 57–76 (GAGVSAESGVPTFRGAGGYW) provides a ligand contact to NAD(+). Substrate is bound by residues Tyr101 and Arg104. 139-142 (QNID) lines the NAD(+) pocket. His157 (proton acceptor) is an active-site residue. 4 residues coordinate Zn(2+): Cys165, Cys168, Cys206, and Cys211. NAD(+)-binding positions include 248–250 (GTS), 274–276 (NME), and Cys292.

It belongs to the sirtuin family. Class III subfamily. Zn(2+) serves as cofactor.

The protein localises to the mitochondrion. It localises to the cytoplasm. The protein resides in the cytosol. It is found in the nucleus. It catalyses the reaction N(6)-malonyl-L-lysyl-[protein] + NAD(+) + H2O = 2''-O-malonyl-ADP-D-ribose + nicotinamide + L-lysyl-[protein]. The enzyme catalyses N(6)-succinyl-L-lysyl-[protein] + NAD(+) + H2O = 2''-O-succinyl-ADP-D-ribose + nicotinamide + L-lysyl-[protein]. It carries out the reaction N(6)-glutaryl-L-lysyl-[protein] + NAD(+) + H2O = 2''-O-glutaryl-ADP-D-ribose + nicotinamide + L-lysyl-[protein]. Functionally, NAD-dependent lysine demalonylase, desuccinylase and deglutarylase that specifically removes malonyl, succinyl and glutaryl groups on target proteins. Has weak NAD-dependent protein deacetylase activity; however this activity may not be physiologically relevant in vivo. In Xenopus tropicalis (Western clawed frog), this protein is NAD-dependent protein deacylase sirtuin-5, mitochondrial (sirt5).